Here is a 255-residue protein sequence, read N- to C-terminus: tRNA (guanine-N(1)-)-methyltransferase (255 aa).

S-adenosyl-L-methionine-binding positions include Gly119 and 139–144; that span reads IGDFIL.

This sequence belongs to the RNA methyltransferase TrmD family. In terms of assembly, homodimer.

It localises to the cytoplasm. It carries out the reaction guanosine(37) in tRNA + S-adenosyl-L-methionine = N(1)-methylguanosine(37) in tRNA + S-adenosyl-L-homocysteine + H(+). Specifically methylates guanosine-37 in various tRNAs. The chain is tRNA (guanine-N(1)-)-methyltransferase from Pseudoalteromonas translucida (strain TAC 125).